We begin with the raw amino-acid sequence, 554 residues long: Valerianol synthase TPS1C (554 aa).

The Mg(2+) site is built by Asp307 and Asp311. Positions 326 to 330 (VQRWD) match the DDXXD motif motif. Positions 452, 456, and 460 each coordinate Mg(2+).

Belongs to the terpene synthase family. Mg(2+) serves as cofactor.

The enzyme catalyses (2E,6E)-farnesyl diphosphate + H2O = valerianol + diphosphate. The protein operates within secondary metabolite biosynthesis; terpenoid biosynthesis. Terpene synthase that catalyzes the biosynthesis of the terpene valerianol, which is a volatile compound of floral scent. In Camellia hiemalis (Camellia), this protein is Valerianol synthase TPS1C.